The primary structure comprises 976 residues: Collagen alpha-1(I) chain (976 aa).

Residue Ser-1 is modified to Phosphoserine. A disordered region spans residues 1-976 (SAGGISVPGP…PGPPGPPGPP (976 aa)). 11 positions are modified to 4-hydroxyproline: Pro-20, Pro-23, Pro-26, Pro-35, Pro-38, Pro-41, Pro-55, Pro-70, Pro-76, Pro-85, and Pro-91. Positions 58–72 (NGDDGEAGKPGRPGE) are enriched in basic and acidic residues. 5-hydroxylysine; alternate is present on Lys-94. An O-linked (Gal...) hydroxylysine; alternate glycan is attached at Lys-94. Ser-100 carries the post-translational modification Phosphoserine. Low complexity-rich tracts occupy residues 108-118 (DAGPAGPKGAP) and 132-150 (PGAS…TGAA). Pro-118, Pro-132, Pro-153, Pro-162, Pro-165, Pro-192, Pro-195, Pro-207, Pro-213, Pro-222, Pro-228, Pro-231, and Pro-246 each carry 4-hydroxyproline. The segment covering 152–164 (PPGPTGPAGPPGF) has biased composition (pro residues). Residues 198 to 237 (AGAAGPAGNPGADGQPGAKGANGAPGIAGAPGFPGARGPS) are compositionally biased toward low complexity. The residue at position 249 (Lys-249) is a 5-hydroxylysine. Residues Pro-255, Pro-258, Pro-266, Pro-275, Pro-290, Pro-296, Pro-304, and Pro-310 each carry the 4-hydroxyproline modification. Gly residues predominate over residues 294–308 (GLPGPGERGGPGSRG). Lys-319 is subject to 5-hydroxylysine. A 4-hydroxyproline mark is found at Pro-328, Pro-337, Pro-343, Pro-349, Pro-358, Pro-361, Pro-370, Pro-379, Pro-385, Pro-397, Pro-406, Pro-415, Pro-418, Pro-436, Pro-453, Pro-459, Pro-465, Pro-471, Pro-477, Pro-483, Pro-495, Pro-504, Pro-517, Pro-523, and Pro-532. Residues 352–378 (KGLTGSPGSPGPDGKTGPPGPAGQDGR) are compositionally biased toward low complexity. Over residues 387 to 406 (ARGQAGVMGFPGPKGAAGEP) the composition is skewed to low complexity. The span at 465-474 (PGEAGKPGEQ) shows a compositional bias: low complexity. Residue Lys-544 is modified to 5-hydroxylysine. Residues Pro-550, Pro-565, and Pro-571 each carry the 4-hydroxyproline modification. Residues 577–591 (SGPSGPAGPTGARGA) show a composition bias toward low complexity. At Ser-580 the chain carries Phosphoserine. 4-hydroxyproline occurs at positions 592, 598, 601, 610, 616, 634, 643, and 652. Residues 604–631 (AGFAGPPGADGQPGAKGEPGDAGAKGDA) are compositionally biased toward low complexity. Lys-655 is modified (5-hydroxylysine). A compositionally biased stretch (low complexity) spans 660–676 (SAGPPGATGFPGAAGRV). A 4-hydroxyproline mark is found at Pro-664 and Pro-670. Residue Pro-678 is modified to 3-hydroxyproline. 15 positions are modified to 4-hydroxyproline: Pro-679, Pro-688, Pro-691, Pro-718, Pro-726, Pro-735, Pro-753, Pro-762, Pro-765, Pro-771, Pro-786, Pro-792, Pro-798, Pro-806, and Pro-812. The span at 723-735 (KGSPGADGPAGAP) shows a compositional bias: low complexity. Pro residues predominate over residues 785–795 (PPGPMGPPGLA). 5-hydroxylysine is present on Lys-821. Over residues 829–844 (PGPPGAPGAPGAPGPV) the composition is skewed to pro residues. 3 positions are modified to 4-hydroxyproline: Pro-832, Pro-835, and Pro-838. The span at 864 to 878 (AGPAGARGPAGPQGP) shows a compositional bias: low complexity. Over residues 879 to 893 (RGDKGETGEQGDRGI) the composition is skewed to basic and acidic residues. Residue Lys-882 is modified to 5-hydroxylysine. Position 894 is a 5-hydroxylysine; alternate (Lys-894). Lys-894 carries an O-linked (Gal...) hydroxylysine; alternate glycan. Pro-907, Pro-910, Pro-928, and Pro-943 each carry 4-hydroxyproline. The segment covering 910–943 (PGEQGPSGASGPAGPRGPPGSAGSPGKDGLNGLP) has biased composition (low complexity). Pro-948 carries the 3-hydroxyproline modification. Pro-949 is subject to 4-hydroxyproline. The segment covering 961–976 (VGPPGPPGPPGPPGPP) has biased composition (pro residues). Pro-963 is modified (3-hydroxyproline). 4-hydroxyproline is present on Pro-964. Pro-966 is subject to 3-hydroxyproline. Position 967 is a 4-hydroxyproline (Pro-967). Pro-969 bears the 3-hydroxyproline mark. Residues Pro-970, Pro-973, and Pro-976 each carry the 4-hydroxyproline modification.

This sequence belongs to the fibrillar collagen family. Trimers of one alpha 2(I) and two alpha 1(I) chains. In terms of processing, contains mostly 4-hydroxyproline. Proline residues at the third position of the tripeptide repeating unit (G-X-Y) are hydroxylated in some or all of the chains. Contains 3-hydroxyproline at a few sites. This modification occurs on the first proline residue in the sequence motif Gly-Pro-Hyp, where Hyp is 4-hydroxyproline. Post-translationally, lysine residues at the third position of the tripeptide repeating unit (G-X-Y) are 5-hydroxylated in some or all of the chains. In terms of processing, O-glycosylated on hydroxylated lysine residues. The O-linked glycan consists of a Glc-Gal disaccharide. Expressed in bones.

The protein localises to the secreted. It localises to the extracellular space. It is found in the extracellular matrix. Functionally, type I collagen is a member of group I collagen (fibrillar forming collagen). In Acratocnus ye (Hispaniolan ground sloth), this protein is Collagen alpha-1(I) chain.